A 290-amino-acid polypeptide reads, in one-letter code: tRNA(Ile)-lysidine synthase, chloroplastic (290 aa).

33–38 is a binding site for ATP; the sequence is SGGQDS.

It belongs to the tRNA(Ile)-lysidine synthase family.

Its subcellular location is the plastid. The protein localises to the chloroplast. It catalyses the reaction cytidine(34) in tRNA(Ile2) + L-lysine + ATP = lysidine(34) in tRNA(Ile2) + AMP + diphosphate + H(+). Functionally, ligates lysine onto the cytidine present at position 34 of the AUA codon-specific tRNA(Ile) that contains the anticodon CAU, in an ATP-dependent manner. Cytidine is converted to lysidine, thus changing the amino acid specificity of the tRNA from methionine to isoleucine. This chain is tRNA(Ile)-lysidine synthase, chloroplastic, found in Cyanidioschyzon merolae (strain NIES-3377 / 10D) (Unicellular red alga).